Consider the following 125-residue polypeptide: C-X-C motif chemokine 9 (125 aa).

Residues 1 to 21 (MKKSAPLFLGIIFLTLTGVQG) form the signal peptide. Disulfide bonds link cysteine 30–cysteine 57 and cysteine 32–cysteine 73. A disordered region spans residues 91–125 (QVNQKKKQRKGKKYKKTKKVPKVKRSQRPSQKKTT). A compositionally biased stretch (basic residues) spans 93–125 (NQKKKQRKGKKYKKTKKVPKVKRSQRPSQKKTT).

It belongs to the intercrine alpha (chemokine CxC) family.

The protein resides in the secreted. Functionally, cytokine that affects the growth, movement, or activation state of cells that participate in immune and inflammatory response. Chemotactic for activated T-cells. Binds to CXCR3. The protein is C-X-C motif chemokine 9 (CXCL9) of Bos taurus (Bovine).